A 461-amino-acid chain; its full sequence is A-type ATP synthase subunit B (461 aa).

The protein belongs to the ATPase alpha/beta chains family. Has multiple subunits with at least A(3), B(3), C, D, E, F, H, I and proteolipid K(x).

Its subcellular location is the cell membrane. Functionally, component of the A-type ATP synthase that produces ATP from ADP in the presence of a proton gradient across the membrane. The B chain is a regulatory subunit. The polypeptide is A-type ATP synthase subunit B (Methanoculleus marisnigri (strain ATCC 35101 / DSM 1498 / JR1)).